The chain runs to 262 residues: Cell division protein ZapD (262 aa).

Belongs to the ZapD family. Interacts with FtsZ.

It localises to the cytoplasm. Functionally, cell division factor that enhances FtsZ-ring assembly. Directly interacts with FtsZ and promotes bundling of FtsZ protofilaments, with a reduction in FtsZ GTPase activity. This Nitrosomonas europaea (strain ATCC 19718 / CIP 103999 / KCTC 2705 / NBRC 14298) protein is Cell division protein ZapD.